Here is a 135-residue protein sequence, read N- to C-terminus: uncharacterized protein (135 aa).

This is an uncharacterized protein from Bacillus subtilis (strain 168).